Consider the following 164-residue polypeptide: Large ribosomal subunit protein bL17 (164 aa).

The interval 127–164 (RARTDSVPARKGAGKKDASRVSGTVPDGQSQKIGKKKE) is disordered.

Belongs to the bacterial ribosomal protein bL17 family. In terms of assembly, part of the 50S ribosomal subunit. Contacts protein L32.

This Treponema pallidum (strain Nichols) protein is Large ribosomal subunit protein bL17.